We begin with the raw amino-acid sequence, 127 residues long: Protein ApaG (127 aa).

One can recognise an ApaG domain in the interval Glu-3–His-127.

The chain is Protein ApaG from Nitrosospira multiformis (strain ATCC 25196 / NCIMB 11849 / C 71).